A 477-amino-acid polypeptide reads, in one-letter code: Probable cytosolic Fe-S cluster assembly factor CG17683 (477 aa).

8 residues coordinate [4Fe-4S] cluster: cysteine 23, cysteine 68, cysteine 71, cysteine 74, cysteine 187, cysteine 243, cysteine 395, and cysteine 399.

Belongs to the NARF family.

Functionally, component of the cytosolic iron-sulfur (Fe/S) protein assembly machinery. Required for maturation of extramitochondrial Fe/S proteins. In Drosophila melanogaster (Fruit fly), this protein is Probable cytosolic Fe-S cluster assembly factor CG17683.